We begin with the raw amino-acid sequence, 115 residues long: Large ribosomal subunit protein bL20 (115 aa).

The protein belongs to the bacterial ribosomal protein bL20 family.

In terms of biological role, binds directly to 23S ribosomal RNA and is necessary for the in vitro assembly process of the 50S ribosomal subunit. It is not involved in the protein synthesizing functions of that subunit. This is Large ribosomal subunit protein bL20 from Chlorobium limicola (strain DSM 245 / NBRC 103803 / 6330).